Consider the following 387-residue polypeptide: UDP-N-acetylglucosamine--N-acetylmuramyl-(pentapeptide) pyrophosphoryl-undecaprenol N-acetylglucosamine transferase (387 aa).

UDP-N-acetyl-alpha-D-glucosamine contacts are provided by residues 14-16, Asn124, Arg167, Ser195, and Gln296; that span reads TGG. A disordered region spans residues 366-387; the sequence is LPQQNSIEEDSTFEKNQEGAVA. Over residues 377–387 the composition is skewed to basic and acidic residues; the sequence is TFEKNQEGAVA.

Belongs to the glycosyltransferase 28 family. MurG subfamily.

It localises to the cell inner membrane. The enzyme catalyses di-trans,octa-cis-undecaprenyl diphospho-N-acetyl-alpha-D-muramoyl-L-alanyl-D-glutamyl-meso-2,6-diaminopimeloyl-D-alanyl-D-alanine + UDP-N-acetyl-alpha-D-glucosamine = di-trans,octa-cis-undecaprenyl diphospho-[N-acetyl-alpha-D-glucosaminyl-(1-&gt;4)]-N-acetyl-alpha-D-muramoyl-L-alanyl-D-glutamyl-meso-2,6-diaminopimeloyl-D-alanyl-D-alanine + UDP + H(+). It participates in cell wall biogenesis; peptidoglycan biosynthesis. Cell wall formation. Catalyzes the transfer of a GlcNAc subunit on undecaprenyl-pyrophosphoryl-MurNAc-pentapeptide (lipid intermediate I) to form undecaprenyl-pyrophosphoryl-MurNAc-(pentapeptide)GlcNAc (lipid intermediate II). The protein is UDP-N-acetylglucosamine--N-acetylmuramyl-(pentapeptide) pyrophosphoryl-undecaprenol N-acetylglucosamine transferase of Zymomonas mobilis subsp. mobilis (strain ATCC 31821 / ZM4 / CP4).